The primary structure comprises 274 residues: NH(3)-dependent NAD(+) synthetase (274 aa).

ATP is bound at residue 46–53 (GISGGQDS). Mg(2+) is bound at residue aspartate 52. Arginine 140 is a deamido-NAD(+) binding site. An ATP-binding site is contributed by threonine 160. Glutamate 165 contributes to the Mg(2+) binding site. Positions 173 and 180 each coordinate deamido-NAD(+). Lysine 189 and threonine 211 together coordinate ATP. 260–261 (HK) provides a ligand contact to deamido-NAD(+).

This sequence belongs to the NAD synthetase family. In terms of assembly, homodimer.

The enzyme catalyses deamido-NAD(+) + NH4(+) + ATP = AMP + diphosphate + NAD(+) + H(+). It functions in the pathway cofactor biosynthesis; NAD(+) biosynthesis; NAD(+) from deamido-NAD(+) (ammonia route): step 1/1. Catalyzes the ATP-dependent amidation of deamido-NAD to form NAD. Uses ammonia as a nitrogen source. The chain is NH(3)-dependent NAD(+) synthetase from Lactococcus lactis subsp. lactis (strain IL1403) (Streptococcus lactis).